The following is a 298-amino-acid chain: Glycine--tRNA ligase alpha subunit (298 aa).

This sequence belongs to the class-II aminoacyl-tRNA synthetase family. Tetramer of two alpha and two beta subunits.

It is found in the cytoplasm. The enzyme catalyses tRNA(Gly) + glycine + ATP = glycyl-tRNA(Gly) + AMP + diphosphate. This chain is Glycine--tRNA ligase alpha subunit, found in Helicobacter pylori (strain Shi470).